The chain runs to 760 residues: Catalase-peroxidase (760 aa).

The disordered stretch occupies residues 1 to 22 (MSQGECPVKKVPNVAGSGTRNT). Residues 93–242 (WHSAGTYRVT…LAAAHMGLIY (150 aa)) constitute a cross-link (tryptophyl-tyrosyl-methioninium (Trp-Tyr) (with M-268)). The Proton acceptor role is filled by His-94. The tract at residues 206 to 226 (KGEGIMDGDQHKTDKSEPHTS) is disordered. The span at 213 to 226 (GDQHKTDKSEPHTS) shows a compositional bias: basic and acidic residues. Residues 242 to 268 (YVNPEGPEGIPDPVAAAHDIRTTFGRM) constitute a cross-link (tryptophyl-tyrosyl-methioninium (Tyr-Met) (with W-93)). His-283 contacts heme b.

This sequence belongs to the peroxidase family. Peroxidase/catalase subfamily. As to quaternary structure, homodimer or homotetramer. The cofactor is heme b. Formation of the three residue Trp-Tyr-Met cross-link is important for the catalase, but not the peroxidase activity of the enzyme.

Its subcellular location is the cytoplasm. It carries out the reaction H2O2 + AH2 = A + 2 H2O. It catalyses the reaction 2 H2O2 = O2 + 2 H2O. Bifunctional enzyme with both catalase and broad-spectrum peroxidase activity. In Pyrenophora tritici-repentis (strain Pt-1C-BFP) (Wheat tan spot fungus), this protein is Catalase-peroxidase.